Reading from the N-terminus, the 325-residue chain is Malate dehydrogenase (325 aa).

Residue 11-17 coordinates NAD(+); it reads GAAGQIA. Residues Arg-92 and Arg-98 each coordinate substrate. Residues Asn-105, Gln-112, and 129-131 each bind NAD(+); that span reads VGN. Substrate contacts are provided by Asn-131 and Arg-162. Residue His-187 is the Proton acceptor of the active site.

It belongs to the LDH/MDH superfamily. MDH type 2 family.

The catalysed reaction is (S)-malate + NAD(+) = oxaloacetate + NADH + H(+). In terms of biological role, catalyzes the reversible oxidation of malate to oxaloacetate. This is Malate dehydrogenase from Methylococcus capsulatus (strain ATCC 33009 / NCIMB 11132 / Bath).